The primary structure comprises 162 residues: Succinate dehydrogenase assembly factor 2-A, mitochondrial (162 aa).

Residues 1-23 (MLRQLRLTMDISGWIFLPWRRSM) constitute a mitochondrion transit peptide.

The protein belongs to the SDHAF2 family. Interacts with the flavoprotein subunit within the SDH catalytic dimer.

It is found in the mitochondrion matrix. In terms of biological role, plays an essential role in the assembly of succinate dehydrogenase (SDH), an enzyme complex (also referred to as respiratory complex II) that is a component of both the tricarboxylic acid (TCA) cycle and the mitochondrial electron transport chain, and which couples the oxidation of succinate to fumarate with the reduction of ubiquinone (coenzyme Q) to ubiquinol. Required for flavinylation (covalent attachment of FAD) of the flavoprotein subunit of the SDH catalytic dimer. The chain is Succinate dehydrogenase assembly factor 2-A, mitochondrial from Drosophila erecta (Fruit fly).